The chain runs to 686 residues: Pollen receptor-like kinase 5 (686 aa).

An N-terminal signal peptide occupies residues 1-39; it reads MRNWEDPFTLACNTALKKNLPSCIFIIIFISVLCPVAMS. The Extracellular segment spans residues 40–283; the sequence is QVVVPDSDAD…GKKAGSFYTL (244 aa). N-linked (GlcNAc...) asparagine glycosylation is present at N60. LRR repeat units lie at residues 112 to 135, 136 to 159, 161 to 184, 185 to 208, and 210 to 230; these read MKNL…VKRF, TSLK…AFLG, PLLK…LASL, PMLL…QQKD, and KLAS…LRNM. Residues 284-304 traverse the membrane as a helical segment; sequence AIILIVIGIILVIIALVFCFV. Residues 305-686 are Cytoplasmic-facing; sequence QSRRRNFLSA…DDDFGFSMNR (382 aa). Residues 328–339 are compositionally biased toward polar residues; sequence NYHQSTNKNNKP. The tract at residues 328–355 is disordered; sequence NYHQSTNKNNKPAESVNHTRRGSMPDPG. The Protein kinase domain maps to 375-648; the sequence is RASAEVLGSG…REVVEMVEML (274 aa). Phosphoserine is present on S377. ATP is bound by residues 381 to 389 and K403; that span reads LGSGTFGAS. 2 positions are modified to phosphoserine: S455 and S458. The residue at position 472 (T472) is a Phosphothreonine. Position 542 is a phosphotyrosine (Y542). S545 carries the phosphoserine modification.

It belongs to the protein kinase superfamily. Ser/Thr protein kinase family. Interacts with the GRI peptide. Expressed in pollen and/or in flowers. Detected at low levels in leaves.

It localises to the cell membrane. It carries out the reaction L-seryl-[protein] + ATP = O-phospho-L-seryl-[protein] + ADP + H(+). The catalysed reaction is L-threonyl-[protein] + ATP = O-phospho-L-threonyl-[protein] + ADP + H(+). In terms of biological role, receptor-like kinase involved in the control of pollen germination and pollen tube polar growth. The extracellular domain serves as a sensor for peptides derived from GRI. May act as a downstream element for ROS-dependent cell death induced by GRI. This is Pollen receptor-like kinase 5 from Arabidopsis thaliana (Mouse-ear cress).